A 486-amino-acid chain; its full sequence is Probable glycine dehydrogenase (decarboxylating) subunit 2 (486 aa).

Lys269 carries the N6-(pyridoxal phosphate)lysine modification.

This sequence belongs to the GcvP family. C-terminal subunit subfamily. As to quaternary structure, the glycine cleavage system is composed of four proteins: P, T, L and H. In this organism, the P 'protein' is a heterodimer of two subunits. Requires pyridoxal 5'-phosphate as cofactor.

The enzyme catalyses N(6)-[(R)-lipoyl]-L-lysyl-[glycine-cleavage complex H protein] + glycine + H(+) = N(6)-[(R)-S(8)-aminomethyldihydrolipoyl]-L-lysyl-[glycine-cleavage complex H protein] + CO2. Its function is as follows. The glycine cleavage system catalyzes the degradation of glycine. The P protein binds the alpha-amino group of glycine through its pyridoxal phosphate cofactor; CO(2) is released and the remaining methylamine moiety is then transferred to the lipoamide cofactor of the H protein. This chain is Probable glycine dehydrogenase (decarboxylating) subunit 2, found in Chlorobaculum tepidum (strain ATCC 49652 / DSM 12025 / NBRC 103806 / TLS) (Chlorobium tepidum).